A 510-amino-acid polypeptide reads, in one-letter code: MQLHLSEPPLTQGECALVYCFAASGGNGRFPLPPEIASWDEKAWSGLVAETVQEQGFQGKPNSSVALRLTGEIRKLVLVGLGDPAALTLEALRRATANGLRQAHSLKAKQVMLSLPETGLDRVRGVQAVAEACLLVAHRDNRFKSSAKGEEENSFSVQEVTLLVPGLAQARPDYEVALQRAIEMAAGTILARELVAAPANIVTPLALADTARQLAQEYGLEVEILGQEECEALGMGAFLGVAKASDLPPQFIHLTYKPAQGDPVTKLALVGKGLTFDSGGLNIKTDSRSIAMMKTDMGGAAAVLGAARALAALKPQVELHFIVAATENMISGHAIHPGDILTASNQKTIEVNNTDAEGRLTLADALVFAEKLGVDAILDLATLTGACVIALGEEIAGLFTPDETLAQELQQAANLSGEKIWRLPLEEGYFEGLSSIVADMKNTGPRSGGSITAALFLKQFVEKTPWAHLDIAGPVWTEKDAGYNNKGATGYGVRTLVEWVLARQAAAACS.

Residues K272 and D277 each coordinate Mn(2+). K284 is an active-site residue. Mn(2+) is bound by residues D296, D355, and E357. R359 is a catalytic residue.

This sequence belongs to the peptidase M17 family. Requires Mn(2+) as cofactor.

The protein resides in the cytoplasm. The catalysed reaction is Release of an N-terminal amino acid, Xaa-|-Yaa-, in which Xaa is preferably Leu, but may be other amino acids including Pro although not Arg or Lys, and Yaa may be Pro. Amino acid amides and methyl esters are also readily hydrolyzed, but rates on arylamides are exceedingly low.. It carries out the reaction Release of an N-terminal amino acid, preferentially leucine, but not glutamic or aspartic acids.. Presumably involved in the processing and regular turnover of intracellular proteins. Catalyzes the removal of unsubstituted N-terminal amino acids from various peptides. The polypeptide is Probable cytosol aminopeptidase (Synechococcus sp. (strain JA-2-3B'a(2-13)) (Cyanobacteria bacterium Yellowstone B-Prime)).